The chain runs to 357 residues: S-adenosylmethionine:tRNA ribosyltransferase-isomerase (357 aa).

This sequence belongs to the QueA family. As to quaternary structure, monomer.

The protein resides in the cytoplasm. The catalysed reaction is 7-aminomethyl-7-carbaguanosine(34) in tRNA + S-adenosyl-L-methionine = epoxyqueuosine(34) in tRNA + adenine + L-methionine + 2 H(+). It functions in the pathway tRNA modification; tRNA-queuosine biosynthesis. In terms of biological role, transfers and isomerizes the ribose moiety from AdoMet to the 7-aminomethyl group of 7-deazaguanine (preQ1-tRNA) to give epoxyqueuosine (oQ-tRNA). This chain is S-adenosylmethionine:tRNA ribosyltransferase-isomerase, found in Proteus mirabilis (strain HI4320).